Reading from the N-terminus, the 385-residue chain is Putative cell agglutination protein pfl8 (385 aa).

Residues 1 to 20 form the signal peptide; it reads MNSYISLIFTLLFFTSAARS. The tract at residues 41-90 is disordered; that stretch reads SSEFTSTITPETPSSSSSTFVPISTHTSSATNTTSGQLSISSSSSTSSEY. 3 N-linked (GlcNAc...) asparagine glycosylation sites follow: N72, N270, and N346. The PA14 domain maps to 196–360; the sequence is EVSTFNKPAY…GPVRTTSYSY (165 aa).

It localises to the secreted. Its subcellular location is the cell surface. Its function is as follows. May be involved in agglutination during conjugation or other aspects of colony formation. Induces flocculation when overexpressed. This is Putative cell agglutination protein pfl8 from Schizosaccharomyces pombe (strain 972 / ATCC 24843) (Fission yeast).